A 506-amino-acid polypeptide reads, in one-letter code: Ribose import ATP-binding protein RbsA 2 (506 aa).

ABC transporter domains lie at 5–241 (LRLS…VGRR) and 254–498 (ADAP…TAGT). 37–44 (GENGAGKS) provides a ligand contact to ATP.

Belongs to the ABC transporter superfamily. Ribose importer (TC 3.A.1.2.1) family. As to quaternary structure, the complex is composed of an ATP-binding protein (RbsA), two transmembrane proteins (RbsC) and a solute-binding protein (RbsB).

It is found in the cell inner membrane. It carries out the reaction D-ribose(out) + ATP + H2O = D-ribose(in) + ADP + phosphate + H(+). Functionally, part of the ABC transporter complex RbsABC involved in ribose import. Responsible for energy coupling to the transport system. The polypeptide is Ribose import ATP-binding protein RbsA 2 (Burkholderia cenocepacia (strain HI2424)).